Consider the following 312-residue polypeptide: Glyoxylate/hydroxypyruvate reductase A (312 aa).

Residue Arg227 is part of the active site. His275 acts as the Proton donor in catalysis.

This sequence belongs to the D-isomer specific 2-hydroxyacid dehydrogenase family. GhrA subfamily.

Its subcellular location is the cytoplasm. It carries out the reaction glycolate + NADP(+) = glyoxylate + NADPH + H(+). It catalyses the reaction (R)-glycerate + NAD(+) = 3-hydroxypyruvate + NADH + H(+). The catalysed reaction is (R)-glycerate + NADP(+) = 3-hydroxypyruvate + NADPH + H(+). Functionally, catalyzes the NADPH-dependent reduction of glyoxylate and hydroxypyruvate into glycolate and glycerate, respectively. This chain is Glyoxylate/hydroxypyruvate reductase A, found in Escherichia coli (strain 55989 / EAEC).